The chain runs to 153 residues: FAD synthase (153 aa).

ATP contacts are provided by residues 9 to 10 (TF), 14 to 17 (HPGH), Asp97, and Tyr124.

Belongs to the archaeal FAD synthase family. As to quaternary structure, homodimer. It depends on a divalent metal cation as a cofactor.

It carries out the reaction FMN + ATP + H(+) = FAD + diphosphate. The protein operates within cofactor biosynthesis; FAD biosynthesis; FAD from FMN: step 1/1. In terms of biological role, catalyzes the transfer of the AMP portion of ATP to flavin mononucleotide (FMN) to produce flavin adenine dinucleotide (FAD) coenzyme. This is FAD synthase from Methanobrevibacter smithii (strain ATCC 35061 / DSM 861 / OCM 144 / PS).